Here is a 107-residue protein sequence, read N- to C-terminus: Small integral membrane protein 19 (107 aa).

A helical transmembrane segment spans residues alanine 25–alanine 43.

This sequence belongs to the SMIM19 family.

The protein resides in the membrane. This chain is Small integral membrane protein 19 (SMIM19), found in Homo sapiens (Human).